The following is a 139-amino-acid chain: Maximins 4/H3 type 4 (139 aa).

Residues 1–18 form the signal peptide; that stretch reads MNFKYIIAVSFLIASAYA. Residues 19 to 43 constitute a propeptide that is removed on maturation; sequence RSVQNDEQSLSQRDVLEEESLREIR. Asn-70 is subject to Asparagine amide. The propeptide occupies 74–118; it reads TAEEHEVMKRLEAVMRDLDSLDHPEEASERETRGFNQDEIAKEKR. Ile-138 bears the Isoleucine amide mark.

Belongs to the bombinin family. Expressed by the skin glands.

It localises to the secreted. Maximin-4 shows antibacterial activity against both Gram-positive and Gram-negative bacteria. It also shows antimicrobial activity against the fungus C.albicans, but not against A.flavus nor P.uticale. It has little hemolytic activity. It does not possess a significant cytotoxicity against tumor cell lines. It does not possess a significant anti-HIV activity. Its function is as follows. Maximin-H3 shows antibacterial activity against both Gram-positive and Gram-negative bacteria. It also shows antimicrobial activity against the fungus C.albicans. Shows strong hemolytic activity. The chain is Maximins 4/H3 type 4 from Bombina maxima (Giant fire-bellied toad).